Consider the following 435-residue polypeptide: MDTIFAVSSGLLPSGVAVIRLSGPHVVHIVKTLCGCLPKARFMHYGNLIARDGSFLDSALTVFFPAPHSFTGEDCAEFHLHGGKAVVNRFLDELSTFSGCRIAEAGEFSRRAFMEGKLDLVQAEGLADLIEAETESQRRLAVMGTSGHLTTLYRDWRHKLMKVRAFIEAELDFADEEDIPDTISDKIWKDVEDLCTSLREHIREGERASILRDGLKIVIAGAPNSGKSSIMNRLAGRSVAIVTEEAGTTRDALEMRLVLGGLPIFLTDTAGFRKTENKIEQLGIEVAKQHVREADLVILVYDIVNPKQVDLPETSAEIWRVGNKLDLYEKNDPCWSIQFSALTGLNFDCFIKKLESFCHRRASEVGNLVPARKRQLQLLKEAVKEIENSLNYHSLDLSLRAEHLRRASDFLGKITGDIDVEDLLDIIFSEFCVGK.

(6S)-5-formyl-5,6,7,8-tetrahydrofolate contacts are provided by Arg-20, Glu-77, and Lys-117. The TrmE-type G domain occupies Gly-214–His-359. GTP contacts are provided by residues Asn-224 to Ser-229, Thr-243 to Thr-249, and Asp-268 to Gly-271. Residues Ser-228 and Thr-249 each contribute to the Mg(2+) site. Residue Lys-435 coordinates (6S)-5-formyl-5,6,7,8-tetrahydrofolate.

This sequence belongs to the TRAFAC class TrmE-Era-EngA-EngB-Septin-like GTPase superfamily. TrmE GTPase family. As to quaternary structure, homodimer. Heterotetramer of two MnmE and two MnmG subunits. The cofactor is K(+).

The protein resides in the cytoplasm. Exhibits a very high intrinsic GTPase hydrolysis rate. Involved in the addition of a carboxymethylaminomethyl (cmnm) group at the wobble position (U34) of certain tRNAs, forming tRNA-cmnm(5)s(2)U34. The chain is tRNA modification GTPase MnmE from Bartonella tribocorum (strain CIP 105476 / IBS 506).